A 488-amino-acid polypeptide reads, in one-letter code: MCNAEFKGDCMIKKIPMIIGGAERDTSEHEYRELTLNSYKVSIPIINQDDVEAIKSQSVENNLNINQIVNFLYTVGQKWKSENYSRRLTYIRDLVRFLGYSPEMAKLEANWISMILSSKSALYDIVETELGSRHIVDEWLPQGDCYVKAMPKGKSVHLLAGNVPLSGVTSIIRAILTKNECIIKTSSADPFTAIALASSFIDTDEHHPISRSMSVMYWSHNEDIAIPQQIMNCADVVVSWGGYDAIKWATEHTPVNVDILKFGPKKSIAIVDNPVDITASAIGVAHDICFYDQQACFSTQDIYYIGDNIDAFFDELVEQLNLYMDILPKGDQTFDEKASFSLIEKECQFAKYKVEKGDNQSWLLVKSPLGSFGNQPLARSAYIHHVSDISEITPYIENRITQTVTVTPWESSFKYRDVLASHGAERIVESGMNNIFRVGGAHDGMRPLQRLVKYISHERPYTYSTKDVAVKIEQTRYLEEDKFLVFVP.

The protein belongs to the LuxC family.

It catalyses the reaction a long-chain fatty aldehyde + NADP(+) + CoA = a long-chain fatty acyl-CoA + NADPH + H(+). The protein operates within lipid metabolism; fatty acid reduction for biolumincescence. Its function is as follows. LuxC is the fatty acid reductase enzyme responsible for synthesis of the aldehyde substrate for the luminescent reaction catalyzed by luciferase. This Photobacterium phosphoreum protein is Long-chain acyl-protein thioester reductase (luxC).